Consider the following 96-residue polypeptide: MKIRPLHDRVVVRRMEEERTTAGGIVIPDSATEKPTRGEIIAVGPGKVLENGDVRALAVKVGDVVLFGKYSGTEVKISGQELVVMREDDIMGVIEK.

Belongs to the GroES chaperonin family. Heptamer of 7 subunits arranged in a ring. Interacts with the chaperonin GroEL.

It localises to the cytoplasm. Functionally, together with the chaperonin GroEL, plays an essential role in assisting protein folding. The GroEL-GroES system forms a nano-cage that allows encapsulation of the non-native substrate proteins and provides a physical environment optimized to promote and accelerate protein folding. GroES binds to the apical surface of the GroEL ring, thereby capping the opening of the GroEL channel. This Legionella micdadei (Tatlockia micdadei) protein is Co-chaperonin GroES.